Reading from the N-terminus, the 817-residue chain is E3 ubiquitin-protein ligase TRIM9 (817 aa).

The RING-type zinc-finger motif lies at cysteine 10–arginine 50. Phosphothreonine is present on threonine 41. Serine 44, serine 46, serine 49, and serine 53 each carry phosphoserine. 2 consecutive B box-type zinc fingers follow at residues alanine 163–proline 212 and arginine 224–leucine 266. Positions 168, 171, 193, 198, 229, 232, 252, and 258 each coordinate Zn(2+). Residues histidine 273 to lysine 340 adopt a coiled-coil conformation. In terms of domain architecture, COS spans isoleucine 374–valine 432. The Fibronectin type-III domain occupies valine 440–alanine 535. Residues alanine 535–proline 557 form a disordered region. A compositionally biased stretch (basic and acidic residues) spans glycine 537 to threonine 547. A B30.2/SPRY domain is found at glutamate 613–leucine 794.

This sequence belongs to the TRIM/RBCC family. Interacts with SNAP25. Post-translationally, auto-ubiquitinated. Brain. Expression is higher in the cerebral cortex and hippocampus (at protein level). Its expression is mainly confined to the central nervous system. The developing neocortex, the dorsal thalamus, the midbrain, the basal area of the hindbrain and spinal cord show high level of expression during embryogenesis. In adult brain, it is detected in the Purkinje cells of the cerebellum, in the hippocampus, and in the cortex.

It is found in the cytoplasm. The protein localises to the cell projection. Its subcellular location is the dendrite. The protein resides in the cytoplasmic vesicle. It localises to the secretory vesicle. It is found in the synaptic vesicle. The protein localises to the synapse. Its subcellular location is the cytoskeleton. The enzyme catalyses S-ubiquitinyl-[E2 ubiquitin-conjugating enzyme]-L-cysteine + [acceptor protein]-L-lysine = [E2 ubiquitin-conjugating enzyme]-L-cysteine + N(6)-ubiquitinyl-[acceptor protein]-L-lysine.. The protein operates within protein modification; protein ubiquitination. In terms of biological role, E3 ubiquitin-protein ligase which ubiquitinates itself in cooperation with an E2 enzyme UBE2D2/UBC4 and serves as a targeting signal for proteasomal degradation. May play a role in regulation of neuronal functions. May act as a regulator of synaptic vesicle exocytosis by controlling the availability of SNAP25 for the SNARE complex formation. The protein is E3 ubiquitin-protein ligase TRIM9 (Trim9) of Mus musculus (Mouse).